Reading from the N-terminus, the 391-residue chain is Metal tolerance protein 7 (391 aa).

The tract at residues 1-21 is disordered; the sequence is MGSRGRRGGGERETETEEDET. The Cytoplasmic segment spans residues 1–103; sequence MGSRGRRGGG…LRQMAKGERL (103 aa). A helical membrane pass occupies residues 104-124; it reads AINLSNIINLILFIGKVLASV. Topologically, residues 125 to 134 are vacuolar; that stretch reads ESLSMAVIAS. Residues 135-155 form a helical membrane-spanning segment; sequence TLDSLLDLLSGFILWFTAHAM. Residues 156-171 are Cytoplasmic-facing; the sequence is KKPNKYSYPIGKRRMQ. A helical transmembrane segment spans residues 172-192; sequence PVGIIVFASVMGTLGFQVLIE. Over 193–210 the chain is Vacuolar; that stretch reads SGRQLITNEHQVFDHRKE. The chain crosses the membrane as a helical span at residues 211–231; it reads LWMIGSMSSVAVVKFFLMLYC. Topologically, residues 232-246 are cytoplasmic; the sequence is RSFKNEIVRAYAQDH. A helical transmembrane segment spans residues 247–264; sequence FFDVITNSVGLVSALLAV. Residues 265-266 are Vacuolar-facing; the sequence is RY. Residues 267 to 287 traverse the membrane as a helical segment; sequence KWWMDPVGAILIAVYTITTWA. Residues 288-391 lie on the Cytoplasmic side of the membrane; that stretch reads RTVVENVGTL…THRPEHKAEV (104 aa).

Belongs to the cation diffusion facilitator (CDF) transporter (TC 2.A.4) family. SLC30A subfamily.

It is found in the vacuole membrane. Its function is as follows. Involved in sequestration of excess metal in the cytoplasm into vacuoles to maintain metal homeostasis. The sequence is that of Metal tolerance protein 7 (MTP7) from Oryza sativa subsp. japonica (Rice).